Consider the following 146-residue polypeptide: 3-dehydroquinate dehydratase (146 aa).

The Proton acceptor role is filled by Tyr22. 3 residues coordinate substrate: Asn74, His80, and Asp87. Residue His100 is the Proton donor of the active site. Substrate is bound by residues 101-102 and Arg111; that span reads LS.

The protein belongs to the type-II 3-dehydroquinase family. As to quaternary structure, homododecamer.

It carries out the reaction 3-dehydroquinate = 3-dehydroshikimate + H2O. It participates in metabolic intermediate biosynthesis; chorismate biosynthesis; chorismate from D-erythrose 4-phosphate and phosphoenolpyruvate: step 3/7. Its function is as follows. Catalyzes a trans-dehydration via an enolate intermediate. The polypeptide is 3-dehydroquinate dehydratase (Clostridium perfringens (strain 13 / Type A)).